Here is a 640-residue protein sequence, read N- to C-terminus: Pro-neuregulin-1, membrane-bound isoform (640 aa).

A propeptide spanning residues 1–19 (MSERKEGRGKGKGKKKERG) is cleaved from the precursor. A disordered region spans residues 1–53 (MSERKEGRGKGKGKKKERGSGKKPESAAGSQSPALPPRLKEMKSQESAAGSKL). At 20–242 (SGKKPESAAG…EKAEELYQKR (223 aa)) the chain is on the extracellular side. The Ig-like C2-type domain occupies 37–128 (PRLKEMKSQE…GNDSASANIT (92 aa)). Cysteines 57 and 112 form a disulfide. N-linked (GlcNAc...) asparagine glycosylation is found at Asn120, Asn126, and Asn164. The EGF-like domain maps to 178–222 (HLVKCAEKEKTFCVNGGECFMVKDLSNPSRYLCKCQPGFTGARCT). Disulfide bonds link Cys182–Cys196, Cys190–Cys210, and Cys212–Cys221. Residues 243–265 (VLTITGICIALLVVGIMCVVAYC) form a helical membrane-spanning segment. Residues 266 to 640 (KTKKQRKKLH…VIANQDPIAV (375 aa)) lie on the Cytoplasmic side of the membrane. Over residues 334-350 (TSHYTSTAHHSTTVTQT) the composition is skewed to low complexity. Disordered regions lie at residues 334-360 (TSHY…NGHT), 375-399 (SVEN…GGPR), 433-461 (RMSP…SMTV), and 524-588 (EYET…DTPF). Residues 351 to 360 (PSHSWSNGHT) are compositionally biased toward polar residues. Residues 387–397 (GPRGRLNGTGG) are compositionally biased toward gly residues. Residues 542–552 (ANSRRAKRTKP) show a composition bias toward basic residues. Residues 563-574 (DSNTSSQSSNSE) are compositionally biased toward low complexity.

The protein belongs to the neuregulin family. As to quaternary structure, the cytoplasmic domain interacts with the LIM domain region of LIMK1. Forms a ternary complex with ERBB3 and ITGAV:ITGB3 or ITGA6:ITGB4. Interacts with NRDC and BACE1. Proteolytic cleavage close to the plasma membrane on the external face leads to the release of the soluble growth factor form. Post-translationally, N- and O-glycosylated. Extensive glycosylation precedes the proteolytic cleavage. As to expression, type I isoforms are the predominant forms expressed in the endocardium. Isoform alpha is expressed in breast, ovary, testis, prostate, heart, skeletal muscle, lung, placenta liver, kidney, salivary gland, small intestine and brain, but not in uterus, stomach, pancreas, and spleen. Isoform 3 is the predominant form in mesenchymal cells and in non-neuronal organs, whereas isoform 6 is the major neuronal form. Isoform 8 is expressed in spinal cord and brain. Isoform 9 is the major form in skeletal muscle cells; in the nervous system it is expressed in spinal cord and brain. Also detected in adult heart, placenta, lung, liver, kidney, and pancreas. Isoform 10 is expressed in nervous system: spinal cord motor neurons, dorsal root ganglion neurons, and brain. Predominant isoform expressed in sensory and motor neurons. Not detected in adult heart, placenta, lung, liver, skeletal muscle, kidney, and pancreas. Not expressed in fetal lung, liver and kidney. Type IV isoforms are brain-specific.

The protein resides in the cell membrane. It localises to the secreted. The protein localises to the nucleus. It is found in the membrane. Its function is as follows. Direct ligand for ERBB3 and ERBB4 tyrosine kinase receptors. Concomitantly recruits ERBB1 and ERBB2 coreceptors, resulting in ligand-stimulated tyrosine phosphorylation and activation of the ERBB receptors. The multiple isoforms perform diverse functions such as inducing growth and differentiation of epithelial, glial, neuronal, and skeletal muscle cells; inducing expression of acetylcholine receptor in synaptic vesicles during the formation of the neuromuscular junction; stimulating lobuloalveolar budding and milk production in the mammary gland and inducing differentiation of mammary tumor cells; stimulating Schwann cell proliferation; implication in the development of the myocardium such as trabeculation of the developing heart. Isoform 10 may play a role in motor and sensory neuron development. Binds to ERBB4. Binds to ERBB3. Acts as a ligand for integrins and binds (via EGF domain) to integrins ITGAV:ITGB3 or ITGA6:ITGB4. Its binding to integrins and subsequent ternary complex formation with integrins and ERRB3 are essential for NRG1-ERBB signaling. Induces the phosphorylation and activation of MAPK3/ERK1, MAPK1/ERK2 and AKT1. Ligand-dependent ERBB4 endocytosis is essential for the NRG1-mediated activation of these kinases in neurons. This is Pro-neuregulin-1, membrane-bound isoform (NRG1) from Homo sapiens (Human).